We begin with the raw amino-acid sequence, 197 residues long: Nascent polypeptide-associated complex subunit alpha (197 aa).

The span at 1–20 (MAEPVEDSVDEISSEGDSDV) shows a compositional bias: acidic residues. 2 disordered regions span residues 1–46 (MAEP…RKLL) and 120–154 (GADRGTDSSAAAHASGHDHAHDHDHSHGDCASKAD). Positions 36 to 101 (DKNERKSRKL…AKVEDMSQNS (66 aa)) constitute an NAC-A/B domain. The span at 134–154 (SGHDHAHDHDHSHGDCASKAD) shows a compositional bias: basic and acidic residues. A UBA domain is found at 158-195 (VNQSDIDLVVSQVGCTREQAVEALIKNKGDIVETIMQL).

It belongs to the NAC-alpha family.

In terms of biological role, may promote appropriate targeting of ribosome-nascent polypeptide complexes. The sequence is that of Nascent polypeptide-associated complex subunit alpha from Babesia divergens.